Here is a 641-residue protein sequence, read N- to C-terminus: Uromodulin (641 aa).

Positions 1-24 are cleaved as a signal peptide; that stretch reads MGQPPLTWMLMVVVASWFITTAAT. N-linked (GlcNAc...) asparagine glycosylation is present at asparagine 25. An EGF-like 1 domain is found at 28-64; that stretch reads EARWCSECHSNATCTEDEAVTTCTCQEGFTGDGLTCV. Cystine bridges form between cysteine 32–cysteine 41, cysteine 35–cysteine 50, cysteine 52–cysteine 63, cysteine 69–cysteine 83, cysteine 77–cysteine 92, cysteine 94–cysteine 106, cysteine 112–cysteine 126, cysteine 120–cysteine 135, cysteine 137–cysteine 148, cysteine 150–cysteine 161, cysteine 155–cysteine 170, cysteine 174–cysteine 267, cysteine 195–cysteine 282, cysteine 217–cysteine 255, cysteine 223–cysteine 287, cysteine 248–cysteine 256, cysteine 297–cysteine 306, cysteine 300–cysteine 315, cysteine 317–cysteine 347, cysteine 335–cysteine 425, and cysteine 366–cysteine 389. The EGF-like 2; calcium-binding domain occupies 65-107; sequence DLDECAIPGAHNCSANSSCVNTPGSFSCVCPEGFRLSPGLGCT. Asparagine 76 is a glycosylation site (N-linked (GlcNAc...) asparagine). Positions 108-149 constitute an EGF-like 3; calcium-binding domain; sequence DVDECAEPGLSHCHALATCVNVVGNYLCVCPAGYRGDGWHCE. The tract at residues 150-171 is beta hairpin; the sequence is CSPGSCGPGLDCVPEGDALVCA. The tract at residues 172–291 is D10C; sequence DPCQAHRTLD…CHLAYCTDPS (120 aa). N-linked (GlcNAc...) asparagine glycosylation is present at asparagine 232. A glycan (N-linked (GlcNAc...) asparagine) is linked at asparagine 275. Residues 292 to 323 enclose the EGF-like 4 domain; it reads SVEGTCEECSIDEDCKSDNGRWHCQCKQDFNI. Residue asparagine 322 is glycosylated (N-linked (GlcNAc...) asparagine). Residues 334–429 form a ZP-N region; it reads ECGANDMKVS…KINFACSYPL (96 aa). The 256-residue stretch at 334–589 folds into the ZP domain; that stretch reads ECGANDMKVS…PTCSGTRFRS (256 aa). The flexible ZP-N/ZP-C linker; important for secretion and polymerization into filaments stretch occupies residues 430 to 453; it reads DMKVSLKTSLQPVVSALNITVGGT. A glycan (N-linked (GlcNAc...) asparagine) is linked at asparagine 447. Residues 454 to 464 form an internal hydrophobic patch (IHP) region; the sequence is GMFTVRMALFQ. Residues 454-589 are ZP-C; it reads GMFTVRMALF…PTCSGTRFRS (136 aa). 3 cysteine pairs are disulfide-bonded: cysteine 506–cysteine 566, cysteine 527–cysteine 582, and cysteine 571–cysteine 578. The interval 586–589 is essential for cleavage by HPN; it reads RFRS. The segment at 598–606 is external hydrophobic patch (EHP); regulates polymerization into filaments; that stretch reads VLNLGPITR. Serine 614 is lipidated: GPI-anchor amidated serine. A propeptide spans 615–641 (removed in mature form); it reads RAAFSSLGLLKVWLPLLLSATLTLTFQ.

Homodimer that then polymerizes into long filaments. The filaments can additionally assemble laterally to form a sheet. The filaments consist of a zigzag-shaped backbone with laterally protruding arms which interact with bacterial adhesin fimH. Two fimH molecules can bind to a single UMOD monomer. Post-translationally, N-glycosylated. In terms of processing, proteolytically cleaved at a conserved C-terminal proteolytic cleavage site to generate the secreted form found in urine. This cleavage is catalyzed by HPN.

The protein resides in the apical cell membrane. It is found in the basolateral cell membrane. The protein localises to the cell projection. Its subcellular location is the cilium membrane. It localises to the secreted. Functionally, functions in biogenesis and organization of the apical membrane of epithelial cells of the thick ascending limb of Henle's loop (TALH), where it promotes formation of complex filamentous gel-like structure that may play a role in the water barrier permeability. May serve as a receptor for binding and endocytosis of cytokines (IL-1, IL-2) and TNF. Facilitates neutrophil migration across renal epithelia. In the urine, may contribute to colloid osmotic pressure, retards passage of positively charged electrolytes, and inhibits formation of liquid containing supersaturated salts and subsequent formation of salt crystals. Protects against urinary tract infections by binding to type 1 fimbriated E.coli. Binds to bacterial adhesin fimH which mediates the stable formation of bacterial aggregates, prevents the binding of E.coli to uroplakins UPK1A and UPK1B which act as urothelial receptors for type I fimbriae, and allows for pathogen clearance through micturation. Also promotes aggregation of other bacteria including K.pneumoniae, P.aeruginosa and S.mitis and so may also protect against other uropathogens. In Pongo abelii (Sumatran orangutan), this protein is Uromodulin (UMOD).